The chain runs to 245 residues: Bis(5'-nucleosyl)-tetraphosphatase PrpE [asymmetrical] (245 aa).

The protein belongs to the PrpE family. Ni(2+) is required as a cofactor.

The enzyme catalyses P(1),P(4)-bis(5'-guanosyl) tetraphosphate + H2O = GMP + GTP + 2 H(+). Asymmetrically hydrolyzes Ap4p to yield AMP and ATP. In Geobacillus thermodenitrificans (strain NG80-2), this protein is Bis(5'-nucleosyl)-tetraphosphatase PrpE [asymmetrical].